The chain runs to 357 residues: tRNA-specific 2-thiouridylase MnmA (357 aa).

ATP is bound by residues 3–10 (AMSGGVDS) and Leu-29. The active-site Nucleophile is Cys-98. Cys-98 and Cys-196 are disulfide-bonded. Gly-122 serves as a coordination point for ATP. The segment at 146–148 (KDQ) is interaction with tRNA. The Cysteine persulfide intermediate role is filled by Cys-196. Residues 302-303 (RY) are interaction with tRNA.

Belongs to the MnmA/TRMU family.

It localises to the cytoplasm. The catalysed reaction is S-sulfanyl-L-cysteinyl-[protein] + uridine(34) in tRNA + AH2 + ATP = 2-thiouridine(34) in tRNA + L-cysteinyl-[protein] + A + AMP + diphosphate + H(+). Its function is as follows. Catalyzes the 2-thiolation of uridine at the wobble position (U34) of tRNA, leading to the formation of s(2)U34. The chain is tRNA-specific 2-thiouridylase MnmA from Moorella thermoacetica (strain ATCC 39073 / JCM 9320).